The chain runs to 123 residues: Large ribosomal subunit protein uL18 (123 aa).

The protein belongs to the universal ribosomal protein uL18 family. Part of the 50S ribosomal subunit; part of the 5S rRNA/L5/L18/L25 subcomplex. Contacts the 5S and 23S rRNAs.

This is one of the proteins that bind and probably mediate the attachment of the 5S RNA into the large ribosomal subunit, where it forms part of the central protuberance. This is Large ribosomal subunit protein uL18 from Chlamydia muridarum (strain MoPn / Nigg).